The following is a 722-amino-acid chain: Peroxisomal bifunctional enzyme (722 aa).

Positions 1–281 (MAEYLRLPHS…FAEKSANKWS (281 aa)) are enoyl-CoA hydratase / isomerase. Ala2 is subject to Blocked amino end (Ala). Lys38 carries the N6-succinyllysine modification. Position 100 (Gly100) interacts with substrate. N6-acetyllysine; alternate is present on Lys173. Residue Lys173 is modified to N6-succinyllysine; alternate. An N6-succinyllysine modification is found at Lys182. N6-acetyllysine; alternate occurs at positions 190 and 218. N6-succinyllysine; alternate occurs at positions 190 and 218. Lys241 bears the N6-succinyllysine mark. Lys249 carries the post-translational modification N6-acetyllysine. An N6-succinyllysine modification is found at Lys253. Lys275 carries the post-translational modification N6-acetyllysine; alternate. N6-succinyllysine; alternate is present on Lys275. Residues Lys279, Lys289, and Lys330 each carry the N6-succinyllysine modification. A 3-hydroxyacyl-CoA dehydrogenase region spans residues 282–571 (TPSGASWKTA…DMLCEAGRFG (290 aa)). N6-acetyllysine is present on residues Lys345, Lys359, and Lys463. An N6-succinyllysine modification is found at Lys531. Thr547 carries the post-translational modification Phosphothreonine. Lys576 carries the N6-succinyllysine modification. Residues Lys583, Lys590, and Lys709 each carry the N6-acetyllysine; alternate modification. 3 positions are modified to N6-succinyllysine; alternate: Lys583, Lys590, and Lys709. Residues 720 to 722 (SKL) carry the Microbody targeting signal motif. Lys721 is subject to N6-succinyllysine.

In the N-terminal section; belongs to the enoyl-CoA hydratase/isomerase family. It in the C-terminal section; belongs to the 3-hydroxyacyl-CoA dehydrogenase family. In terms of assembly, monomer. Post-translationally, acetylated, leading to enhanced enzyme activity. Acetylation is enhanced by up to 80% after treatment either with trichostin A (TCA) or with nicotinamide (NAM) with highest increase on Lys-345. Acetylation and enzyme activity increased by about 1.5% on addition of fatty acids.

It is found in the peroxisome. The catalysed reaction is a (3S)-3-hydroxyacyl-CoA = a (2E)-enoyl-CoA + H2O. It catalyses the reaction a 4-saturated-(3S)-3-hydroxyacyl-CoA = a (3E)-enoyl-CoA + H2O. The enzyme catalyses a (3Z)-enoyl-CoA = a 4-saturated (2E)-enoyl-CoA. It carries out the reaction a (3E)-enoyl-CoA = a 4-saturated (2E)-enoyl-CoA. The catalysed reaction is a (3S)-3-hydroxyacyl-CoA + NAD(+) = a 3-oxoacyl-CoA + NADH + H(+). It catalyses the reaction (2S,3S)-3-hydroxy-2-methylbutanoyl-CoA = (2E)-2-methylbut-2-enoyl-CoA + H2O. The enzyme catalyses (3E,5Z)-tetradecadienoyl-CoA = (2E,5Z)-tetradecadienoyl-CoA. It carries out the reaction (3E,5Z)-octadienoyl-CoA = (2E,5Z)-octadienoyl-CoA. The catalysed reaction is (3S)-hydroxydecanoyl-CoA + NAD(+) = 3-oxodecanoyl-CoA + NADH + H(+). It catalyses the reaction (3E)-decenoyl-CoA = (2E)-decenoyl-CoA. The enzyme catalyses (3Z)-hexenoyl-CoA = (2E)-hexenoyl-CoA. It carries out the reaction (3E)-hexenoyl-CoA = (2E)-hexenoyl-CoA. The catalysed reaction is (3S)-hydroxydecanoyl-CoA = (2E)-decenoyl-CoA + H2O. It catalyses the reaction (3S)-hydroxyhexanoyl-CoA = (2E)-hexenoyl-CoA + H2O. The enzyme catalyses (3S)-hydroxyhexadecanoyl-CoA + NAD(+) = 3-oxohexadecanoyl-CoA + NADH + H(+). It carries out the reaction (3S)-hydroxyhexadecanoyl-CoA = (2E)-hexadecenoyl-CoA + H2O. The catalysed reaction is (2E)-hexadecenedioyl-CoA + H2O = (3S)-hydroxyhexadecanedioyl-CoA. It catalyses the reaction (3S)-hydroxyhexadecanedioyl-CoA + NAD(+) = 3-oxohexadecanedioyl-CoA + NADH + H(+). The protein operates within lipid metabolism; fatty acid beta-oxidation. Enzyme activity enhanced by acetylation. Peroxisomal trifunctional enzyme possessing 2-enoyl-CoA hydratase, 3-hydroxyacyl-CoA dehydrogenase, and delta 3, delta 2-enoyl-CoA isomerase activities. Catalyzes two of the four reactions of the long chain fatty acids peroxisomal beta-oxidation pathway. Can also use branched-chain fatty acids such as 2-methyl-2E-butenoyl-CoA as a substrate, which is hydrated into (2S,3S)-3-hydroxy-2-methylbutanoyl-CoA. Optimal isomerase for 2,5 double bonds into 3,5 form isomerization in a range of enoyl-CoA species. Also able to isomerize both 3-cis and 3-trans double bonds into the 2-trans form in a range of enoyl-CoA species. Regulates the amount of medium-chain dicarboxylic fatty acids which are essential regulators of all fatty acid oxidation pathways. Also involved in the degradation of long-chain dicarboxylic acids through peroxisomal beta-oxidation. The chain is Peroxisomal bifunctional enzyme from Rattus norvegicus (Rat).